Reading from the N-terminus, the 264-residue chain is Glucosamine-6-phosphate deaminase (264 aa).

The Proton acceptor; for enolization step role is filled by aspartate 67. Asparagine 136 functions as the For ring-opening step in the catalytic mechanism. Histidine 138 acts as the Proton acceptor; for ring-opening step in catalysis. Residue glutamate 143 is the For ring-opening step of the active site.

This sequence belongs to the glucosamine/galactosamine-6-phosphate isomerase family. NagB subfamily. In terms of assembly, homohexamer.

The catalysed reaction is alpha-D-glucosamine 6-phosphate + H2O = beta-D-fructose 6-phosphate + NH4(+). It participates in amino-sugar metabolism; N-acetylneuraminate degradation; D-fructose 6-phosphate from N-acetylneuraminate: step 5/5. Functionally, catalyzes the reversible isomerization-deamination of glucosamine 6-phosphate (GlcN6P) to form fructose 6-phosphate (Fru6P) and ammonium ion. In Shewanella woodyi (strain ATCC 51908 / MS32), this protein is Glucosamine-6-phosphate deaminase.